The following is a 338-amino-acid chain: 3-dehydroquinate synthase (338 aa).

It belongs to the archaeal-type DHQ synthase family.

The catalysed reaction is 2-amino-2,3,7-trideoxy-D-lyxo-hept-6-ulosonate + NAD(+) + H2O = 3-dehydroquinate + NH4(+) + NADH + H(+). In terms of biological role, catalyzes the oxidative deamination and cyclization of 2-amino-3,7-dideoxy-D-threo-hept-6-ulosonic acid (ADH) to yield 3-dehydroquinate (DHQ), which is fed into the canonical shikimic pathway of aromatic amino acid biosynthesis. This Cenarchaeum symbiosum (strain A) protein is 3-dehydroquinate synthase.